The chain runs to 109 residues: Large ribosomal subunit protein uL22 (109 aa).

The protein belongs to the universal ribosomal protein uL22 family. Part of the 50S ribosomal subunit.

This protein binds specifically to 23S rRNA; its binding is stimulated by other ribosomal proteins, e.g. L4, L17, and L20. It is important during the early stages of 50S assembly. It makes multiple contacts with different domains of the 23S rRNA in the assembled 50S subunit and ribosome. In terms of biological role, the globular domain of the protein is located near the polypeptide exit tunnel on the outside of the subunit, while an extended beta-hairpin is found that lines the wall of the exit tunnel in the center of the 70S ribosome. This Paraburkholderia xenovorans (strain LB400) protein is Large ribosomal subunit protein uL22.